Consider the following 1827-residue polypeptide: Sucrase-isomaltase, intestinal (1827 aa).

Residues A2 to T12 lie on the Cytoplasmic side of the membrane. S7 bears the Phosphoserine; by PKA mark. The helical; Signal-anchor for type II membrane protein transmembrane segment at L13 to A32 threads the bilayer. Residues T33–S1827 are Lumenal-facing. The segment at E39–P64 is disordered. Over residues P43 to P64 the composition is skewed to low complexity. Residues V61–D110 form the P-type 1 domain. 3 disulfides stabilise this stretch: C63–C94, C77–C93, and C88–C106. N-linked (GlcNAc...) asparagine glycosylation occurs at N99. Residues D110–R1007 form an isomaltase region. Substrate contacts are provided by D264 and D388. A sulfotyrosine mark is found at Y391 and Y400. N455 carries an N-linked (GlcNAc...) asparagine glycan. D505 functions as the Nucleophile; for isomaltase activity in the catalytic mechanism. C520 and C545 are joined by a disulfide. R588 is a substrate binding site. The active-site For isomaltase activity is D604. C635 and C646 are disulfide-bonded. Position 662 (H662) interacts with substrate. Residues N859, N896, and N904 are each glycosylated (N-linked (GlcNAc...) asparagine). Residues D932–K978 enclose the P-type 2 domain. The segment at I1008–S1827 is sucrase. Residues N1235, N1303, N1325, N1340, N1354, and N1368 are each glycosylated (N-linked (GlcNAc...) asparagine). Sulfotyrosine occurs at positions 1382 and 1385. The Nucleophile; for sucrase activity role is filled by D1394. Catalysis depends on E1397, which acts as the For sucrase activity. N1403 carries N-linked (GlcNAc...) asparagine glycosylation. D1500 functions as the Proton donor; for sucrase activity in the catalytic mechanism. 5 N-linked (GlcNAc...) asparagine glycosylation sites follow: N1535, N1572, N1748, N1763, and N1799.

The protein belongs to the glycosyl hydrolase 31 family. As to quaternary structure, the resulting sucrase and isomaltase subunits stay associated with one another in a complex by non-covalent linkages. In terms of processing, the precursor is proteolytically cleaved when exposed to pancreatic proteases in the intestinal lumen. N- and O-glycosylated. Post-translationally, sulfated.

It localises to the apical cell membrane. It carries out the reaction Hydrolysis of sucrose and maltose by an alpha-D-glucosidase-type action.. The enzyme catalyses Hydrolysis of (1-&gt;6)-alpha-D-glucosidic linkages in some oligosaccharides produced from starch and glycogen by alpha-amylase, and in isomaltose.. Plays an important role in the final stage of carbohydrate digestion. Isomaltase activity is specific for both alpha-1,4- and alpha-1,6-oligosaccharides. The protein is Sucrase-isomaltase, intestinal (SI) of Oryctolagus cuniculus (Rabbit).